Here is a 591-residue protein sequence, read N- to C-terminus: Aspartate--tRNA ligase (591 aa).

Glu-173 serves as a coordination point for L-aspartate. The interval 197-200 is aspartate; it reads QLFK. Arg-219 contacts L-aspartate. ATP contacts are provided by residues 219–221 and Gln-228; that span reads RDE. His-448 is an L-aspartate binding site. An ATP-binding site is contributed by Glu-482. Arg-489 serves as a coordination point for L-aspartate. Residue 534–537 coordinates ATP; it reads GLDR.

The protein belongs to the class-II aminoacyl-tRNA synthetase family. Type 1 subfamily. Homodimer.

The protein localises to the cytoplasm. It catalyses the reaction tRNA(Asp) + L-aspartate + ATP = L-aspartyl-tRNA(Asp) + AMP + diphosphate. Functionally, catalyzes the attachment of L-aspartate to tRNA(Asp) in a two-step reaction: L-aspartate is first activated by ATP to form Asp-AMP and then transferred to the acceptor end of tRNA(Asp). In Shewanella frigidimarina (strain NCIMB 400), this protein is Aspartate--tRNA ligase.